The sequence spans 319 residues: MSPNGSDRSPRRPMRRKLLQALTAGLVLATATGCTYEDFPRLGMPTPTTEEAPRILSLWQGSWAAALATGVLVWGLILWSVFFHRRSRTKVEVPPQTRYNLPIEALYTMVPLVIVSVLFYFTARDESDLMSLNKKPDLTVNVVGFQWSWCFNHIEDVPGSTGDAKTSKELAGIPDRFIEDFPANAGGVYDCGTPGTENPQTGNPGPTLWLPKGKTVRFVLTSRDVIHSFWVVPFLMKQDVIPGHTNAFEVTPNKEGTFLGKCAELCGVDHSRMLFNVKVVSPERYEQHLQDLAKKGQTGYVPAGIAQTSHEKNRETNNL.

Positions M1–G33 are cleaved as a signal peptide. 2 consecutive transmembrane segments (helical) span residues W63–F83 and L101–F121. H227, C262, C266, and H270 together coordinate Cu cation.

The protein belongs to the cytochrome c oxidase subunit 2 family. It depends on Cu cation as a cofactor. The cofactor is heme.

The protein localises to the cell membrane. The catalysed reaction is 4 Fe(II)-[cytochrome c] + O2 + 8 H(+)(in) = 4 Fe(III)-[cytochrome c] + 2 H2O + 4 H(+)(out). In terms of biological role, subunits I and II form the functional core of the enzyme complex. Electrons originating in cytochrome c are transferred via heme a and Cu(A) to the binuclear center formed by heme a3 and Cu(B). The chain is Probable cytochrome c oxidase subunit 2 (ctaC) from Streptomyces coelicolor (strain ATCC BAA-471 / A3(2) / M145).